Here is a 109-residue protein sequence, read N- to C-terminus: Cell division protein ZapA (109 aa).

A coiled-coil region spans residues 21 to 99 (PEQQDALNQA…IEQALLEQGR (79 aa)).

Belongs to the ZapA family. Type 1 subfamily. In terms of assembly, homodimer. Interacts with FtsZ.

It is found in the cytoplasm. Activator of cell division through the inhibition of FtsZ GTPase activity, therefore promoting FtsZ assembly into bundles of protofilaments necessary for the formation of the division Z ring. It is recruited early at mid-cell but it is not essential for cell division. The sequence is that of Cell division protein ZapA from Pectobacterium carotovorum subsp. carotovorum (strain PC1).